Consider the following 430-residue polypeptide: Septin-14 (430 aa).

The Septin-type G domain occupies 48-313 (KGFSFNILCV…ECYRSNRLQK (266 aa)). The interval 58–65 (GETGIGKT) is G1 motif. GTP-binding positions include 58–65 (GETGIGKT), Gly113, 194–202 (KADSLSKND), Gly246, and Arg261. Residues 110–113 (KTVG) form a G3 motif region. Residues 193 to 196 (AKAD) form a G4 motif region. Residues 329–410 (QEMYEAKRRE…IIDFYKMKAA (82 aa)) are a coiled coil. Residues 367-430 (DAEKELQDKF…NIKKDKDRKK (64 aa)) form a required for interaction with SEPTIN4. Required for migration of cortical neurons during corticogenesis region.

It belongs to the TRAFAC class TrmE-Era-EngA-EngB-Septin-like GTPase superfamily. Septin GTPase family. In terms of assembly, septins polymerize into heterooligomeric protein complexes that form filaments, and can associate with cellular membranes, actin filaments and microtubules. GTPase activity is required for filament formation. Interacts with ACTN4. Interacts with SEPTIN9. Interacts (via C-terminus) with SEPTIN4. As to expression, expressed in the testis and brain including the cerebrum, hippocampus and cerebellum (at protein level).

It localises to the cytoplasm. The protein resides in the cytoskeleton. Its subcellular location is the cell projection. The protein localises to the axon. It is found in the dendrite. It localises to the perikaryon. The protein resides in the perinuclear region. Its subcellular location is the cytoplasmic vesicle. The protein localises to the secretory vesicle. It is found in the acrosome. Functionally, filament-forming cytoskeletal GTPase. Involved in the migration of cortical neurons and the formation of neuron leading processes during embryonic development. Plays a role in sperm head formation during spermiogenesis, potentially via facilitating localization of ACTN4 to cell filaments. The sequence is that of Septin-14 from Mus musculus (Mouse).